We begin with the raw amino-acid sequence, 592 residues long: Guanylate-binding protein 1 (592 aa).

A GTPase domain (Globular) region spans residues 1 to 311; the sequence is MASEIHMTGP…NAISSGDLPC (311 aa). The region spanning 35–278 is the GB1/RHD3-type G domain; it reads TQPMVVVAIV…FCSYIFSNSK (244 aa). Residues 45-52, 67-69, and 97-101 each bind GTP; these read GLYRTGKS, LGS, and DTEGL. A Phosphoserine modification is found at serine 156. Residue cysteine 589 is modified to Cysteine methyl ester. Cysteine 589 is lipidated: S-farnesyl cysteine. Threonine 590 is modified (phosphothreonine). Positions 590–592 are cleaved as a propeptide — removed in mature form; that stretch reads TIS.

The protein belongs to the TRAFAC class dynamin-like GTPase superfamily. GB1/RHD3 GTPase family. GB1 subfamily. Homodimer; homodimerization occurs upon GTP-binding and is required for the second hydrolysis step from GDP to GMP. Undergoes conformational changes and oligomerization upon GTP-binding and hydrolysis. Heterodimer with other family members, including GBP2, GBP3, GBP4 and GBP5. Dimerization regulates subcellular location to membranous structures. Interacts with SQSTM1. Interacts (when phosphorylated) with 14-3-3 protein sigma (SFN); leading to GBP1 retention in the cytosol and inactivation. In terms of processing, isoprenylation is required for proper subcellular location. Post-translationally, phosphorylated at Ser-156 by PIM1 in absence of infection, inhibits GBP1: phosphorylation promotes interaction with 14-3-3 protein sigma (SFN), leading to GBP1 retention in the cytosol. Dephosphorylated in response to infection, liberating GBP1.

It is found in the cytoplasmic vesicle membrane. The protein resides in the golgi apparatus membrane. It localises to the cell membrane. Its subcellular location is the cytoplasm. The protein localises to the cytosol. It is found in the secreted. It catalyses the reaction GTP + H2O = GDP + phosphate + H(+). It carries out the reaction GDP + H2O = GMP + phosphate + H(+). Its function is as follows. Interferon (IFN)-inducible GTPase that plays important roles in innate immunity against a diverse range of bacterial, viral and protozoan pathogens. Hydrolyzes GTP to GMP in two consecutive cleavage reactions: GTP is first hydrolyzed to GDP and then to GMP in a processive manner. Following infection, recruited to the pathogen-containing vacuoles or vacuole-escaped bacteria and promotes both inflammasome assembly and autophagy. Acts as a positive regulator of inflammasome assembly by facilitating the detection of inflammasome ligands from pathogens. Involved in the lysis of pathogen-containing vacuoles, releasing pathogens into the cytosol. Following pathogen release in the cytosol, forms a protein coat in a GTPase-dependent manner that encapsulates pathogens and promotes the detection of ligands by pattern recognition receptors. Plays a key role in inflammasome assembly in response to infection by Gram-negative bacteria: following pathogen release in the cytosol, forms a protein coat that encapsulates Gram-negative bacteria and directly binds to lipopolysaccharide (LPS), disrupting the O-antigen barrier and unmasking lipid A that is that detected by the non-canonical inflammasome effector CASP4/CASP11. Also promotes recruitment of proteins that mediate bacterial cytolysis, leading to release double-stranded DNA (dsDNA) that activates the AIM2 inflammasome. Involved in autophagy by regulating bacteriolytic peptide generation via its interaction with ubiquitin-binding protein SQSTM1, which delivers monoubiquitinated proteins to autolysosomes for the generation of bacteriolytic peptides. Confers protection to several pathogens, including the bacterial pathogens L.monocytogenes and M.bovis BCG as well as the protozoan pathogen T.gondii. Exhibits antiviral activity against influenza virus. This is Guanylate-binding protein 1 (GBP1) from Pongo abelii (Sumatran orangutan).